The primary structure comprises 205 residues: Adenylyl-sulfate kinase (205 aa).

An ATP-binding site is contributed by 31–38; the sequence is GLSGAGKS. Serine 105 (phosphoserine intermediate) is an active-site residue.

Belongs to the APS kinase family.

The catalysed reaction is adenosine 5'-phosphosulfate + ATP = 3'-phosphoadenylyl sulfate + ADP + H(+). The protein operates within sulfur metabolism; hydrogen sulfide biosynthesis; sulfite from sulfate: step 2/3. Functionally, catalyzes the synthesis of activated sulfate. The protein is Adenylyl-sulfate kinase of Shewanella sp. (strain MR-7).